The primary structure comprises 589 residues: Putative sphingomyelin phosphodiesterase asm-3 (589 aa).

The signal sequence occupies residues 1–17; sequence MLLGLLVLSLAFQGTLA. Residues 18 to 101 enclose the Saposin B-type domain; sequence VTECEECKSI…LMKNDCGDFV (84 aa). Disulfide bonds link Cys-21–Cys-97, Cys-24–Cys-89, and Cys-52–Cys-63. The N-linked (GlcNAc...) asparagine glycan is linked to Asn-109. Zn(2+) contacts are provided by Asp-139 and His-141. 2 cysteine pairs are disulfide-bonded: Cys-154–Cys-159 and Cys-160–Cys-188. A Zn(2+)-binding site is contributed by Asp-217. N-linked (GlcNAc...) asparagine glycosylation occurs at Asn-237. Zn(2+) is bound at residue Asn-257. N-linked (GlcNAc...) asparagine glycosylation is present at Asn-334. His-364, His-398, and His-400 together coordinate Zn(2+). An N-linked (GlcNAc...) asparagine glycan is attached at Asn-463. 2 cysteine pairs are disulfide-bonded: Cys-530–Cys-535 and Cys-541–Cys-553. Positions 562 to 589 are disordered; that stretch reads KPEPKKNKYSARFATSNERRRGKEECKI. Positions 578–589 are enriched in basic and acidic residues; sequence NERRRGKEECKI.

It belongs to the acid sphingomyelinase family. Requires Zn(2+) as cofactor.

It is found in the secreted. It catalyses the reaction an N-(acyl)-sphingosylphosphocholine + H2O = an N-acyl-sphingoid base + phosphocholine + H(+). It carries out the reaction a sphingomyelin + H2O = phosphocholine + an N-acylsphing-4-enine + H(+). The enzyme catalyses an N-acyl-15-methylhexadecasphing-4-enine-1-phosphocholine + H2O = an N-acyl-15-methylhexadecasphing-4-enine + phosphocholine + H(+). The protein operates within lipid metabolism; sphingolipid metabolism. In terms of biological role, converts sphingomyelin to ceramide (N-acyl-sphingoid base) and phosphocholine. C.elegans contain specific sphingoid bases, which are unique or different in structure compared to the sphingoid bases found in other animals. Two examples of these distinctive compounds are: 15-methylhexadecasphinganine and 15-methylhexadecasphing-4-enine. This Caenorhabditis elegans protein is Putative sphingomyelin phosphodiesterase asm-3 (asm-3).